We begin with the raw amino-acid sequence, 410 residues long: uncharacterized protein (410 aa).

The span at 178–187 (QKNHRNQLST) shows a compositional bias: polar residues. Disordered regions lie at residues 178 to 203 (QKNH…QEHQ) and 236 to 272 (RAEQ…PTVQ). Residues 188–198 (QKKQQQALQKA) are compositionally biased toward low complexity. Over residues 236–263 (RAEQAAREQEKREREALAQRQKAEEKRT) the composition is skewed to basic and acidic residues.

This is an uncharacterized protein from Haemophilus influenzae (strain ATCC 51907 / DSM 11121 / KW20 / Rd).